The sequence spans 126 residues: UPF0538 protein C2orf76 homolog (126 aa).

This sequence belongs to the UPF0538 family.

The protein is UPF0538 protein C2orf76 homolog of Mus musculus (Mouse).